A 520-amino-acid polypeptide reads, in one-letter code: Probable cytochrome P450 4p2 (520 aa).

2 residues coordinate heme: glutamate 325 and cysteine 464.

Belongs to the cytochrome P450 family. Heme serves as cofactor.

It localises to the endoplasmic reticulum membrane. It is found in the microsome membrane. May be involved in the metabolism of insect hormones and in the breakdown of synthetic insecticides. The sequence is that of Probable cytochrome P450 4p2 (Cyp4p2) from Drosophila melanogaster (Fruit fly).